Here is a 230-residue protein sequence, read N- to C-terminus: Protein FAM3A (230 aa).

The first 33 residues, 1 to 33 (MRLAGPLRIVVLVVSVGVTWIVVSILLGGPGSG), serve as a signal peptide directing secretion. Cystine bridges form between Cys-59/Cys-87 and Cys-65/Cys-222. Positions 68–226 (EHLAFRVVSG…LEMEGCIPRR (159 aa)) constitute a GG-type lectin domain.

The protein belongs to the FAM3 family. In similar amounts in testis, pancreas, adrenal, placenta, brain, fetal brain, liver, kidney, skeletal muscle and heart.

It is found in the secreted. Its function is as follows. May act as a defensin against invading fungal microorganisms. This Homo sapiens (Human) protein is Protein FAM3A (FAM3A).